A 30-amino-acid polypeptide reads, in one-letter code: Kalata-B5 (30 aa).

Residues 1-30 (GTPCGESCVYIPCISGVIGCSCTDKVCYLN) constitute a cross-link (cyclopeptide (Gly-Asn)). Intrachain disulfides connect C4–C20, C8–C22, and C13–C27.

In terms of processing, this is a cyclic peptide.

Its function is as follows. Probably participates in a plant defense mechanism. In Oldenlandia affinis, this protein is Kalata-B5.